The chain runs to 102 residues: Large ribosomal subunit protein bL21 (102 aa).

This sequence belongs to the bacterial ribosomal protein bL21 family. Part of the 50S ribosomal subunit. Contacts protein L20.

Functionally, this protein binds to 23S rRNA in the presence of protein L20. This Onion yellows phytoplasma (strain OY-M) protein is Large ribosomal subunit protein bL21.